A 249-amino-acid chain; its full sequence is Photosystem I-associated linker protein CpcL (249 aa).

Residues 11 to 189 form the PBS-linker domain; sequence VSQNQRVTNY…PRYGADHREK (179 aa). A helical transmembrane segment spans residues 223–247; it reads VVLYVGGALVSLGIIAVALSAWGII.

The protein belongs to the phycobilisome linker protein family. In terms of assembly, part of a specialized phycobilisome (PBS), a structure that is usually composed of two distinct substructures: a core complex and a number of rods radiating from the core. This protein is part of a core-less PBS rod (called CpcL-PBS) with on average 5 stacked phycocyanin hexamers (PC, CpcA and CpcB). Linker CpcL connects the PC stack to the thylakoid, the hexamers are linked by 1 copy of CpcC1, 3 copies of CpcC2 and the stack is terminated by a single copy of CpcD. Ferredoxin--NADP reductase (petH) is also part of the complex. CpcL-PBS has no central core proteins (allophycocyanin ApcA, ApcB) nor phycobiliprotein ApcE.

Its subcellular location is the cellular thylakoid membrane. Its function is as follows. Rod linker protein, associated with phycocyanin. Linker polypeptides determine the state of aggregation and the location of the disk-shaped phycobiliprotein units within the phycobilisome and modulate their spectroscopic properties in order to mediate a directed and optimal energy transfer. Plays a role in energy transfer from the phycobilisome to photosystem I (PSI). Although able to transfer energy to both photosystems, this is predominantly a PSI antenna. The polypeptide is Photosystem I-associated linker protein CpcL (Synechocystis sp. (strain ATCC 27184 / PCC 6803 / Kazusa)).